A 653-amino-acid polypeptide reads, in one-letter code: ATP-dependent zinc metalloprotease FtsH 1 (653 aa).

Over 1–8 (MAENKWLR) the chain is Cytoplasmic. Residues 9–29 (NGFVWIVLIIAVVALWVTFMK) traverse the membrane as a helical segment. Over 30–110 (DGGSAREENF…RVNPASQWGN (81 aa)) the chain is Extracellular. The helical transmembrane segment at 111 to 131 (WLSALTFILPTLFLIGIVIFM) threads the bilayer. Over 132-653 (MRQAQGTNNQ…SPTMRPQPAS (522 aa)) the chain is Cytoplasmic. Position 203 to 210 (203 to 210 (GPPGTGKT)) interacts with ATP. H425 contributes to the Zn(2+) binding site. The active site involves E426. Zn(2+) contacts are provided by H429 and D501. Positions 604 to 653 (EPRPRPQLVGPPVTRPAALAHKTEEADRGGERSPHPQPHPSPTMRPQPAS) are disordered. The span at 624 to 637 (HKTEEADRGGERSP) shows a compositional bias: basic and acidic residues. Pro residues predominate over residues 638–653 (HPQPHPSPTMRPQPAS).

The protein in the central section; belongs to the AAA ATPase family. It in the C-terminal section; belongs to the peptidase M41 family. In terms of assembly, homohexamer. Requires Zn(2+) as cofactor.

The protein localises to the cell membrane. Functionally, acts as a processive, ATP-dependent zinc metallopeptidase for both cytoplasmic and membrane proteins. Plays a role in the quality control of integral membrane proteins. The sequence is that of ATP-dependent zinc metalloprotease FtsH 1 from Sphaerobacter thermophilus (strain ATCC 49802 / DSM 20745 / KCCM 41009 / NCIMB 13125 / S 6022).